Reading from the N-terminus, the 178-residue chain is Ribulose bisphosphate carboxylase small subunit, chloroplastic (178 aa).

The transit peptide at 1 to 55 (MASSMMVSTAAVSRTSPAQSNMVVPFAGLHSSAAFPVTRKFADSSKLPSNGLRVR) directs the protein to the chloroplast.

Belongs to the RuBisCO small chain family. Heterohexadecamer of 8 large and 8 small subunits.

The protein resides in the plastid. It localises to the chloroplast. In terms of biological role, ruBisCO catalyzes two reactions: the carboxylation of D-ribulose 1,5-bisphosphate, the primary event in carbon dioxide fixation, as well as the oxidative fragmentation of the pentose substrate. Both reactions occur simultaneously and in competition at the same active site. Although the small subunit is not catalytic it is essential for maximal activity. This Zantedeschia aethiopica (White calla lily) protein is Ribulose bisphosphate carboxylase small subunit, chloroplastic.